Reading from the N-terminus, the 855-residue chain is Coiled-coil domain-containing protein 87 (855 aa).

2 disordered regions span residues 23 to 43 (LFPS…QDAT) and 278 to 302 (SRPS…PTSP). Low complexity predominate over residues 287–296 (PSHSPSSESH). Coiled-coil stretches lie at residues 387 to 413 (TRRL…EASG) and 764 to 789 (RSYL…ESVF).

The protein belongs to the CCDC87 family. In terms of tissue distribution, specifically expressed in testis (at protein level). Not detected in other tissues tested (at protein level). In the testis, localizes to pachytene spermatocytes and spermatids.

Functionally, plays a role in spermatogenesis, where it is important for normal sperm head morphology. Also required for the acrosome reaction and thus normal male fertility. The sequence is that of Coiled-coil domain-containing protein 87 (Ccdc87) from Mus musculus (Mouse).